A 393-amino-acid polypeptide reads, in one-letter code: Major outer membrane porin, serovar L1 (393 aa).

Residues 1–22 (MKKLLKSVLVFAALSSASSLQA) form the signal peptide.

Belongs to the chlamydial porin (CP) (TC 1.B.2) family. In terms of assembly, part of a disulfide cross-linked outer membrane complex (COMC) composed of the major outer membrane porin (MOMP), the small cysteine-rich protein (OmcA) and the large cysteine-rich periplasmic protein (OmcB).

It localises to the cell outer membrane. In elementary bodies (EBs, the infectious stage, which is able to survive outside the host cell) provides the structural integrity of the outer envelope through disulfide cross-links with the small cysteine-rich protein and the large cysteine-rich periplasmic protein. It has been described in publications as the Sarkosyl-insoluble COMC (Chlamydia outer membrane complex), and serves as the functional equivalent of peptidoglycan. Its function is as follows. Permits diffusion of specific solutes through the outer membrane. The protein is Major outer membrane porin, serovar L1 (ompA) of Chlamydia trachomatis.